The following is a 323-amino-acid chain: tRNA dimethylallyltransferase (323 aa).

An ATP-binding site is contributed by 12-19; the sequence is GPTAAGKT. 14 to 19 contributes to the substrate binding site; that stretch reads TAAGKT. 2 interaction with substrate tRNA regions span residues 37–40 and 161–165; these read DSAL and QRLMR.

It belongs to the IPP transferase family. As to quaternary structure, monomer. Mg(2+) serves as cofactor.

The enzyme catalyses adenosine(37) in tRNA + dimethylallyl diphosphate = N(6)-dimethylallyladenosine(37) in tRNA + diphosphate. Catalyzes the transfer of a dimethylallyl group onto the adenine at position 37 in tRNAs that read codons beginning with uridine, leading to the formation of N6-(dimethylallyl)adenosine (i(6)A). The polypeptide is tRNA dimethylallyltransferase (Pseudomonas paraeruginosa (strain DSM 24068 / PA7) (Pseudomonas aeruginosa (strain PA7))).